The primary structure comprises 323 residues: Deaminated glutathione amidase (323 aa).

The transit peptide at 1–33 (MLGFITRPPHQLLCTGYRLLRTPVLCTQPRPRT) directs the protein to the mitochondrion. The 253-residue stretch at 42-294 (LPLVAVCQVT…PGLCLARIDL (253 aa)) folds into the CN hydrolase domain. Catalysis depends on Glu-82, which acts as the Proton acceptor. The active-site Proton donor is Lys-157. The Nucleophile role is filled by Cys-199.

This sequence belongs to the carbon-nitrogen hydrolase superfamily. NIT1/NIT2 family. Expressed in most tissues with higher expression in adult liver and kidney as well as in fetal adrenal gland and skeletal muscle.

The protein resides in the mitochondrion. The protein localises to the cytoplasm. The catalysed reaction is N-(4-oxoglutaryl)-L-cysteinylglycine + H2O = L-cysteinylglycine + 2-oxoglutarate. The enzyme catalyses N-(4-carboxy-4-oxobutanoyl)-L-ethylglycylglycine + H2O = N-(2-aminobutanoyl)glycine + 2-oxoglutarate. Functionally, catalyzes the hydrolysis of the amide bond in N-(4-oxoglutarate)-L-cysteinylglycine (deaminated glutathione), a metabolite repair reaction to dispose of the harmful deaminated glutathione. Possesses amidase activity toward deaminated ophthalmate in vitro. Plays a role in cell growth and apoptosis: loss of expression promotes cell growth, resistance to DNA damage stress and increased incidence to NMBA-induced tumors. Has tumor suppressor properties that enhances the apoptotic responsiveness in cancer cells; this effect is additive to the tumor suppressor activity of FHIT. It is also a negative regulator of primary T-cells. This chain is Deaminated glutathione amidase, found in Mus musculus (Mouse).